The following is a 66-amino-acid chain: Large ribosomal subunit protein uL29 (66 aa).

This sequence belongs to the universal ribosomal protein uL29 family.

The polypeptide is Large ribosomal subunit protein uL29 (Lachnospira eligens (strain ATCC 27750 / DSM 3376 / VPI C15-48 / C15-B4) (Eubacterium eligens)).